We begin with the raw amino-acid sequence, 63 residues long: 2-hydroxymuconate tautomerase (63 aa).

Residue P2 is the Proton acceptor; via imino nitrogen of the active site.

This sequence belongs to the 4-oxalocrotonate tautomerase family. In terms of assembly, homohexamer.

It carries out the reaction (2Z,4E)-2-hydroxyhexa-2,4-dienedioate = (3E)-2-oxohex-3-enedioate. Its pathway is aromatic compound metabolism; salicylate degradation. Functionally, catalyzes the ketonization of 2-hydroxymuconate stereoselectively to yield 2-oxo-3-hexenedioate. The polypeptide is 2-hydroxymuconate tautomerase (nahJ) (Pseudomonas putida (Arthrobacter siderocapsulatus)).